The chain runs to 431 residues: tRNA(Ile)-lysidine synthase (431 aa).

ATP is bound at residue 19–24 (STGIDS).

The protein belongs to the tRNA(Ile)-lysidine synthase family.

The protein localises to the cytoplasm. The enzyme catalyses cytidine(34) in tRNA(Ile2) + L-lysine + ATP = lysidine(34) in tRNA(Ile2) + AMP + diphosphate + H(+). Its function is as follows. Ligates lysine onto the cytidine present at position 34 of the AUA codon-specific tRNA(Ile) that contains the anticodon CAU, in an ATP-dependent manner. Cytidine is converted to lysidine, thus changing the amino acid specificity of the tRNA from methionine to isoleucine. This Staphylococcus aureus (strain MRSA252) protein is tRNA(Ile)-lysidine synthase.